The following is a 29-amino-acid chain: Cycloviolacin-O15 (29 aa).

The cyclopeptide (Gly-Asn) cross-link spans 1-29 (GLVPCGETCFTGKCYTPGCSCSYPICKKN). 3 cysteine pairs are disulfide-bonded: Cys5–Cys19, Cys9–Cys21, and Cys14–Cys26.

Post-translationally, this is a cyclic peptide.

Its function is as follows. Probably participates in a plant defense mechanism. Has hemolytic activity. This Viola odorata (Sweet violet) protein is Cycloviolacin-O15.